The primary structure comprises 556 residues: MKTDIEIAQSIELKPIVDVVEKLGISYDDLELYGKYKAKLSFDKIRAVESNPVGKLILVTAINPTPAGEGKSTLTIGLADALNKIGKKTMIAIREPSLGPVMGIKGGAAGGGYAQVLPMEDINLHFTGDMHAITTANNALSALIDNHLHQGNELGIDQRRILWKRVVDLNDRTLRHVTVGLGGPLNGIPREDGFDITVASEIMAILCLATDIEDLKRRLANIVIGYRYDRTPVSVGDLQVEGALALILKDAIKPNLVQTIYGTPAFVHGGPFANIAHGCNSVLATTTALHLADYTVTEAGFGADLGAEKFLDIKTPNLPTSPDAVVIVATLRALKMNGGVAKDALTEENVEAVRAGFANLKRHVENIRKFGIPAVVAINEFVSDTEAEIAALKELCASIDVPVELASVWADGAEGGVALAETVVKTIAENPANYKRLYDNDLSVQEKIEKIVTEIYRGSKVNFEKKAQTQIAQIVQNGWDKLPICMAKTQYSFSDNPNALGAPENFEITIRELVPKLGAGFIVALTGDVMTMPGLPKRPAALNMDVESDGTVLGLF.

Position 65–72 (65–72) interacts with ATP; the sequence is TPAGEGKS.

It belongs to the formate--tetrahydrofolate ligase family.

The catalysed reaction is (6S)-5,6,7,8-tetrahydrofolate + formate + ATP = (6R)-10-formyltetrahydrofolate + ADP + phosphate. Its pathway is one-carbon metabolism; tetrahydrofolate interconversion. The sequence is that of Formate--tetrahydrofolate ligase from Streptococcus pneumoniae serotype 4 (strain ATCC BAA-334 / TIGR4).